Reading from the N-terminus, the 377-residue chain is Enoyl reductase cheB (377 aa).

Positions 18-361 (GGSLVIARDV…REISAEKLVV (344 aa)) are enoyl reductase (ER) domain. 49-52 (CDFK) lines the NADP(+) pocket. Substrate is bound at residue 137-144 (PCCIATMG). NADP(+)-binding positions include 173–176 (SSSV), 200–203 (SPKN), Tyr-218, 265–266 (LE), and Thr-283. 285–289 (GAIII) contributes to the substrate binding site. Residue 354 to 355 (IS) participates in NADP(+) binding.

This sequence belongs to the zinc-containing alcohol dehydrogenase family. Heme is required as a cofactor.

It functions in the pathway secondary metabolite biosynthesis. Its function is as follows. Enoyl reductase; part of the gene cluster that mediates the biosynthesis of chaetoglobosin A which has a unique inhibitory activity against actin polymerization in mammalian cells. Chaetoglobosin A and its intermediates are involved in the morphological differentiation of C.globosum. The first step of the pathway is the synthesis of prochaetoglobosin I via condensation of one acetyl-CoA, 8 malonyl-CoA, and a L-tryptophan molecule by the PKS-NRPS hybrid synthetase cheA, followed by reduction of backbone double bond to install desired geometry by the enoyl reductase cheB. Further multiple oxidation steps performed by the cytochrome P450 monooxygenases cheE and cheG, as well as by the FAD-linked oxidoreductase cheF, lead to the formation of chaetoglobosin A. Depending on the order of action of these reductases, distinct intermediates can be identified. Within the pathway, the cytochrome P450 monooxygenase cheE catalyzes a stereospecific epoxidation on prochaetoglobosin I, cytoglobosin D, and chaetoglobosin J intermediates. The FAD-linked oxidoreductase cheF performs dehydrogenation of the C-20 hydroxyl groups in the 20-dihyrochaetoglobosin A and cytoglobosin D intermediates. Finally, the cytochrome P450 monooxygenase cheG can catalyze the stereospecific dihydroxylation of prochaetoglobosin I and prochaetoglobosin IV at C-19 and C-20, respectively. The Diels-Alderase cheD may play a role in the post-PKS-NRPS biosynthetic steps catalyzing Diels-Alder cyclization. In Chaetomium globosum (strain ATCC 6205 / CBS 148.51 / DSM 1962 / NBRC 6347 / NRRL 1970) (Soil fungus), this protein is Enoyl reductase cheB.